Reading from the N-terminus, the 434-residue chain is MGIKNLKSLLLENKSLTILDDNLYKVYNGIFVDTMSIYIAVANCVRNLEELTTVFIKYVNGWVKKGGHVTLFIDRGSIKIKQDVRDKRRKYSKLTKDRKMLELEKCTSEIQNVTGFMEEEIKAEMQLKIDKLTFQIYLSDSDNIKISLNEILTHFNNNENVTLFYCDERDAEFVMCLEAKTHFSTTGEWPLIISTDQDTMLFASTDNHPKMIKNLTQLFKFVPSAEDNYLAKLTALVNGCDFFPGLYGASITPNNLNKIQLFSDFTIDNIVTSLAIKNYYRKTNSTVDVRNIVTFINDYANLDDVYSYVPPCQCTVQEFIFSALDEKWNNFKSSYLETVPLPCQLMYALEPRKEIDVSEVKTLSSYIDFENTKSDIDVIKSISSIFGYSNENCNTIVFGIYKDNLLLSINNSFYFNDSLLITNTKSDNIINIGY.

Mg(2+) contacts are provided by Asp-33, Asp-74, Glu-168, Asp-170, Asp-196, and Asp-198.

It belongs to the XPG/RAD2 endonuclease family. FEN1 subfamily. The cofactor is Mg(2+).

It localises to the virion. Putative nuclease that seems to be required for double-strand break repair, homologous recombination, and production of full-length viral genomic DNA. This is Putative nuclease OPG089 (OPG089) from Vaccinia virus (strain Copenhagen) (VACV).